A 205-amino-acid polypeptide reads, in one-letter code: Phosphoribosyl-dephospho-CoA transferase (205 aa).

Residues Asp-134 and Asp-136 contribute to the active site.

The protein belongs to the MdcG family.

It catalyses the reaction apo-[malonate decarboxylase ACP] + 2'-(5''-triphospho-alpha-D-ribosyl)-3'-dephospho-CoA = holo-[malonate decarboxylase ACP] + diphosphate. In terms of biological role, transfers 2'-(5-triphosphoribosyl)-3'-dephosphocoenzyme-A to the apo-[acyl-carrier-protein] of the malonate decarboxylase to yield holo-[acyl-carrier-protein]. The sequence is that of Phosphoribosyl-dephospho-CoA transferase from Klebsiella pneumoniae (strain 342).